The chain runs to 372 residues: Chaperone protein DnaJ (372 aa).

In terms of domain architecture, J spans 5–69; sequence EFYDRLGVSK…QKRAAYDQYG (65 aa). A CR-type zinc finger spans residues 129–211; that stretch reads GTEKEVKYHR…CHGTGHEKQA (83 aa). Cys142, Cys145, Cys159, Cys162, Cys185, Cys188, Cys199, and Cys202 together coordinate Zn(2+). CXXCXGXG motif repeat units lie at residues 142–149, 159–166, 185–192, and 199–206; these read CRTCNGSG, CGRCHGAG, CDVCHGRG, and CTTCHGTG.

Belongs to the DnaJ family. As to quaternary structure, homodimer. The cofactor is Zn(2+).

The protein localises to the cytoplasm. Functionally, participates actively in the response to hyperosmotic and heat shock by preventing the aggregation of stress-denatured proteins and by disaggregating proteins, also in an autonomous, DnaK-independent fashion. Unfolded proteins bind initially to DnaJ; upon interaction with the DnaJ-bound protein, DnaK hydrolyzes its bound ATP, resulting in the formation of a stable complex. GrpE releases ADP from DnaK; ATP binding to DnaK triggers the release of the substrate protein, thus completing the reaction cycle. Several rounds of ATP-dependent interactions between DnaJ, DnaK and GrpE are required for fully efficient folding. Also involved, together with DnaK and GrpE, in the DNA replication of plasmids through activation of initiation proteins. The chain is Chaperone protein DnaJ from Streptococcus pneumoniae (strain ATCC BAA-255 / R6).